The primary structure comprises 125 residues: Testis-specific protein LINC02914 (125 aa).

Residues 1–12 (MHRKEPGARLEA) are compositionally biased toward basic and acidic residues. Residues 1–45 (MHRKEPGARLEATRGAARPHKQGTKPMITRPSVSQLGEGKCPSSQ) form a disordered region.

As to expression, expressed in testes and ejaculated spermatozoa (at protein level).

It localises to the cytoplasm. Its subcellular location is the nucleus. The protein resides in the cell projection. The protein localises to the cilium. It is found in the flagellum. In terms of biological role, may play a role in the flagellum biology. This is Testis-specific protein LINC02914 from Homo sapiens (Human).